The sequence spans 390 residues: Peroxisomal sarcosine oxidase (390 aa).

FAD is bound at residue 9-39 (DAIVIGAGIQGCFTAYHLAKHSKSVLLLEQF). An N6-acetyllysine mark is found at K126 and K287. C319 carries the S-8alpha-FAD cysteine modification. The Microbody targeting signal signature appears at 388–390 (AHL).

It belongs to the MSOX/MTOX family. The cofactor is FAD. In terms of tissue distribution, kidney and liver.

The protein localises to the peroxisome. The catalysed reaction is sarcosine + O2 + H2O = formaldehyde + glycine + H2O2. It carries out the reaction L-pipecolate + O2 = L-1-piperideine-6-carboxylate + H2O2 + H(+). In terms of biological role, metabolizes sarcosine, L-pipecolic acid and L-proline. The polypeptide is Peroxisomal sarcosine oxidase (Pipox) (Mus musculus (Mouse)).